Reading from the N-terminus, the 332-residue chain is Cytochrome c1, heme protein, mitochondrial (332 aa).

A mitochondrion-targeting transit peptide spans 1–70; the sequence is MLARTCLRST…YYHLYGFASA (70 aa). The Mitochondrial intermembrane segment spans residues 71-277; sequence MTPAEEGLHA…AEPEMDDRKR (207 aa). A Cytochrome c domain is found at 97–250; sequence QALRRGFQVY…GLVDYEDGTP (154 aa). Positions 110, 113, and 114 each coordinate heme c. A compositionally biased stretch (acidic residues) spans 139 to 151; the sequence is EENEYDTEPNDQG. Positions 139–162 are disordered; that stretch reads EENEYDTEPNDQGEIEKRPGKLSD. Heme c is bound at residue Met234. Residues 278 to 296 traverse the membrane as a helical segment; it reads MGMKVLVVTSVLFALSVYV. Over 297-332 the chain is Mitochondrial matrix; sequence KRYKWAWLKSRKIVYDPPKSPPPATNLALPQQRAKS.

It belongs to the cytochrome c family. Component of the ubiquinol-cytochrome c oxidoreductase (cytochrome b-c1 complex, complex III, CIII), a multisubunit enzyme composed of 10 subunits. The complex is composed of 3 respiratory subunits cytochrome b (cob), cytochrome c1 (cyt-1) and Rieske protein (fes-1), 2 core protein subunits pep and ucr-1, and 5 low-molecular weight protein subunits qcr6, qcr7, qcr8, qcr9 and probably NCU16844/qcr10. The complex exists as an obligatory dimer and forms supercomplexes (SCs) in the inner mitochondrial membrane with NADH-ubiquinone oxidoreductase (complex I, CI) and cytochrome c oxidase (complex IV, CIV), resulting in different assemblies (supercomplexes SCI(1)III(2), SCIII(2)IV(1) and SCIII(2)IV(2) as well as higher order I(x)III(y)IV(z) megacomplexes). It depends on heme c as a cofactor.

The protein localises to the mitochondrion inner membrane. It carries out the reaction a quinol + 2 Fe(III)-[cytochrome c](out) = a quinone + 2 Fe(II)-[cytochrome c](out) + 2 H(+)(out). Functionally, component of the ubiquinol-cytochrome c oxidoreductase, a multisubunit transmembrane complex that is part of the mitochondrial electron transport chain which drives oxidative phosphorylation. The respiratory chain contains 3 multisubunit complexes succinate dehydrogenase (complex II, CII), ubiquinol-cytochrome c oxidoreductase (cytochrome b-c1 complex, complex III, CIII) and cytochrome c oxidase (complex IV, CIV), that cooperate to transfer electrons derived from NADH and succinate to molecular oxygen, creating an electrochemical gradient over the inner membrane that drives transmembrane transport and the ATP synthase. The cytochrome b-c1 complex catalyzes electron transfer from ubiquinol to cytochrome c, linking this redox reaction to translocation of protons across the mitochondrial inner membrane, with protons being carried across the membrane as hydrogens on the quinol. In the process called Q cycle, 2 protons are consumed from the matrix, 4 protons are released into the intermembrane space and 2 electrons are passed to cytochrome c. Cytochrome c1 is a catalytic core subunit containing a c-type heme. It transfers electrons from the [2Fe-2S] iron-sulfur cluster of the Rieske protein to cytochrome c. This is Cytochrome c1, heme protein, mitochondrial (cyt-1) from Neurospora crassa (strain ATCC 24698 / 74-OR23-1A / CBS 708.71 / DSM 1257 / FGSC 987).